Consider the following 72-residue polypeptide: SRY-related protein AES6 (72 aa).

The HMG box DNA-binding region spans 1–69 (VKRPMNAFMV…KHMADYPDYK (69 aa)).

It is found in the nucleus. The sequence is that of SRY-related protein AES6 from Alligator mississippiensis (American alligator).